Consider the following 319-residue polypeptide: Ferrochelatase (319 aa).

His-193 and Glu-274 together coordinate Fe cation.

This sequence belongs to the ferrochelatase family.

The protein resides in the cytoplasm. The enzyme catalyses heme b + 2 H(+) = protoporphyrin IX + Fe(2+). The protein operates within porphyrin-containing compound metabolism; protoheme biosynthesis; protoheme from protoporphyrin-IX: step 1/1. Functionally, catalyzes the ferrous insertion into protoporphyrin IX. The chain is Ferrochelatase from Actinobacillus pleuropneumoniae serotype 3 (strain JL03).